Reading from the N-terminus, the 359-residue chain is Serpentine receptor class epsilon-26 (359 aa).

7 consecutive transmembrane segments (helical) span residues 29–49 (CAISSAELPFYMLSAYVVFVS), 66–86 (IGVPMFGSWFLLIAGKLITIL), 127–147 (VAGFLEIHFGFSVIFVGLAIV), 172–192 (FIIIYQFLAISISLGILFNIL), 195–215 (YVLNASWILCILIGTIMYYYI), 256–276 (LVFVVLATIVVMGFGIVALVL), and 282–302 (FFMHFGENTLFCYPLYIFLVV).

It belongs to the nematode receptor-like protein sre family.

It is found in the membrane. The polypeptide is Serpentine receptor class epsilon-26 (sre-26) (Caenorhabditis elegans).